Here is a 419-residue protein sequence, read N- to C-terminus: Histidine--tRNA ligase (419 aa).

It belongs to the class-II aminoacyl-tRNA synthetase family.

It is found in the cytoplasm. It carries out the reaction tRNA(His) + L-histidine + ATP = L-histidyl-tRNA(His) + AMP + diphosphate + H(+). This Pyrobaculum aerophilum (strain ATCC 51768 / DSM 7523 / JCM 9630 / CIP 104966 / NBRC 100827 / IM2) protein is Histidine--tRNA ligase.